A 575-amino-acid polypeptide reads, in one-letter code: Dihydroxy-acid dehydratase (575 aa).

The interval 1-25 (MPTTDSARAADIKQPDIKPRSRDVT) is disordered. Basic and acidic residues predominate over residues 8 to 25 (RAADIKQPDIKPRSRDVT). C64 contributes to the [2Fe-2S] cluster binding site. Mg(2+) is bound at residue D96. C137 contacts [2Fe-2S] cluster. D138 and K139 together coordinate Mg(2+). K139 is subject to N6-carboxylysine. C214 contacts [2Fe-2S] cluster. Residue E465 participates in Mg(2+) binding. S491 serves as the catalytic Proton acceptor.

It belongs to the IlvD/Edd family. As to quaternary structure, homodimer. [2Fe-2S] cluster is required as a cofactor. Requires Mg(2+) as cofactor.

It carries out the reaction (2R)-2,3-dihydroxy-3-methylbutanoate = 3-methyl-2-oxobutanoate + H2O. The catalysed reaction is (2R,3R)-2,3-dihydroxy-3-methylpentanoate = (S)-3-methyl-2-oxopentanoate + H2O. The protein operates within amino-acid biosynthesis; L-isoleucine biosynthesis; L-isoleucine from 2-oxobutanoate: step 3/4. It functions in the pathway amino-acid biosynthesis; L-valine biosynthesis; L-valine from pyruvate: step 3/4. In terms of biological role, functions in the biosynthesis of branched-chain amino acids. Catalyzes the dehydration of (2R,3R)-2,3-dihydroxy-3-methylpentanoate (2,3-dihydroxy-3-methylvalerate) into 2-oxo-3-methylpentanoate (2-oxo-3-methylvalerate) and of (2R)-2,3-dihydroxy-3-methylbutanoate (2,3-dihydroxyisovalerate) into 2-oxo-3-methylbutanoate (2-oxoisovalerate), the penultimate precursor to L-isoleucine and L-valine, respectively. The protein is Dihydroxy-acid dehydratase of Mycobacterium avium (strain 104).